A 365-amino-acid polypeptide reads, in one-letter code: Peptide chain release factor 2 (365 aa).

Glutamine 252 bears the N5-methylglutamine mark.

This sequence belongs to the prokaryotic/mitochondrial release factor family. In terms of processing, methylated by PrmC. Methylation increases the termination efficiency of RF2.

The protein resides in the cytoplasm. In terms of biological role, peptide chain release factor 2 directs the termination of translation in response to the peptide chain termination codons UGA and UAA. The polypeptide is Peptide chain release factor 2 (Haemophilus ducreyi (strain 35000HP / ATCC 700724)).